Reading from the N-terminus, the 128-residue chain is MSDAANDTKVRFDPERLTFNEAGLVPAIAQDAETSEVLMLAWMNAESIARTLRTGRVTYWSRSRQAFWVKGETSGHVQELVDLRIDCDRDCLLVLLRQTGPACHTGRRSCFYTGVRDGHEQELMTPQD.

D86 lines the Mg(2+) pocket. Residue C87 coordinates Zn(2+). Mg(2+) contacts are provided by D88 and D90. Zn(2+) contacts are provided by C103 and C110.

The protein belongs to the PRA-CH family. As to quaternary structure, homodimer. It depends on Mg(2+) as a cofactor. Zn(2+) serves as cofactor.

It localises to the cytoplasm. It carries out the reaction 1-(5-phospho-beta-D-ribosyl)-5'-AMP + H2O = 1-(5-phospho-beta-D-ribosyl)-5-[(5-phospho-beta-D-ribosylamino)methylideneamino]imidazole-4-carboxamide. It functions in the pathway amino-acid biosynthesis; L-histidine biosynthesis; L-histidine from 5-phospho-alpha-D-ribose 1-diphosphate: step 3/9. Catalyzes the hydrolysis of the adenine ring of phosphoribosyl-AMP. This Roseobacter denitrificans (strain ATCC 33942 / OCh 114) (Erythrobacter sp. (strain OCh 114)) protein is Phosphoribosyl-AMP cyclohydrolase.